The primary structure comprises 179 residues: uncharacterized protein (179 aa).

Residues 21-109 (QQDAVILVDV…WKQAGLPTVK (89 aa)) form the Rhodanese domain. A run of 2 helical transmembrane segments spans residues 115–135 (ISIM…GVLL) and 138–158 (FVAP…LFAG).

Its subcellular location is the cell membrane. This is an uncharacterized protein from Synechocystis sp. (strain ATCC 27184 / PCC 6803 / Kazusa).